Consider the following 183-residue polypeptide: Ribonuclease H (183 aa).

The 150-residue stretch at 2–151 folds into the RNase H type-1 domain; the sequence is SQARFIAFSD…VDQLAQAAAR (150 aa). Residues aspartate 11, glutamate 57, aspartate 79, and aspartate 143 each coordinate Mg(2+).

This sequence belongs to the RNase H family. As to quaternary structure, monomer. Requires Mg(2+) as cofactor.

Its subcellular location is the cytoplasm. It catalyses the reaction Endonucleolytic cleavage to 5'-phosphomonoester.. In terms of biological role, endonuclease that specifically degrades the RNA of RNA-DNA hybrids. The sequence is that of Ribonuclease H from Anaeromyxobacter sp. (strain K).